The chain runs to 195 residues: Large ribosomal subunit protein bL27c (195 aa).

The N-terminal 60 residues, 1-60 (MASMAFTLVGAFKGMSLSSPCHSSSSASFLRADRVSLSVGGGVGMGVPMTMPVRRLTIQM), are a transit peptide targeting the chloroplast.

The protein belongs to the bacterial ribosomal protein bL27 family. As to quaternary structure, part of the 50S ribosomal subunit.

It localises to the plastid. The protein localises to the chloroplast. This chain is Large ribosomal subunit protein bL27c (RPL27), found in Oryza sativa subsp. japonica (Rice).